Reading from the N-terminus, the 399-residue chain is MESKDQNVYRKGSDNFSKGSNTFFGNLKSISTTTTTTTTTANTDQQVSKVAENNEIDDNSSVDSSSSNPSSSSTSTTPVKPKTFVDGALRGVWSIGVGVVNGAKGIVEQPYLGAKNNGLGGFVKGVAKGVSGVVILPAVGVLEFFSYTTQGIYNTPITVLDAMKSSPKEEEMITVSAEIPTIFFAVELEESFKTAKEKGIPHLLKVCIEFISRRKNIEGIFRISGSKFLIDEIQSKFDKGLITSVEDLDPNWIYEVACIFKSYFRYLPHSVIPDEQITEFYRIQNNITDATEKAAALKAVVNSIPNFQYTILYECISLLHDISLNSKENLMTPSNLSIVYGPSLLRPNIEKGDIQEIANANTIVFNLISFFQQIFIKNPDPSILEIEHPITPIKPMIQK.

A compositionally biased stretch (basic and acidic residues) spans 1–13; that stretch reads MESKDQNVYRKGS. A disordered region spans residues 1–80; sequence MESKDQNVYR…SSSTSTTPVK (80 aa). Residues 14-31 show a composition bias toward polar residues; that stretch reads DNFSKGSNTFFGNLKSIS. Residues 61 to 79 show a composition bias toward low complexity; it reads SVDSSSSNPSSSSTSTTPV. The Rho-GAP domain occupies 186–375; it reads VELEESFKTA…NLISFFQQIF (190 aa).

It is found in the cytoplasm. Its function is as follows. Rho GTPase-activating protein involved in the signal transduction pathway. The protein is Rho GTPase-activating protein gacC (gacC) of Dictyostelium discoideum (Social amoeba).